Consider the following 325-residue polypeptide: NADH-quinone oxidoreductase subunit H (325 aa).

A run of 9 helical transmembrane segments spans residues 11–31 (ILLT…CGAF), 50–69 (SRVG…KMFF), 81–101 (LIFT…FAIV), 114–134 (IGIL…LFAG), 154–174 (LSYE…AGSF), 186–206 (LWNI…GVAV), 237–257 (FFVG…TLFF), 265–285 (LPPF…FILV), and 304–324 (ICLP…LYHA).

The protein belongs to the complex I subunit 1 family. As to quaternary structure, NDH-1 is composed of 13 different subunits. Subunits NuoA, H, J, K, L, M, N constitute the membrane sector of the complex.

It localises to the cell inner membrane. It carries out the reaction a quinone + NADH + 5 H(+)(in) = a quinol + NAD(+) + 4 H(+)(out). Its function is as follows. NDH-1 shuttles electrons from NADH, via FMN and iron-sulfur (Fe-S) centers, to quinones in the respiratory chain. The immediate electron acceptor for the enzyme in this species is believed to be ubiquinone. Couples the redox reaction to proton translocation (for every two electrons transferred, four hydrogen ions are translocated across the cytoplasmic membrane), and thus conserves the redox energy in a proton gradient. This subunit may bind ubiquinone. The chain is NADH-quinone oxidoreductase subunit H from Edwardsiella ictaluri (strain 93-146).